We begin with the raw amino-acid sequence, 156 residues long: Small ribosomal subunit protein uS7 (156 aa).

This sequence belongs to the universal ribosomal protein uS7 family. As to quaternary structure, part of the 30S ribosomal subunit. Contacts proteins S9 and S11.

Its function is as follows. One of the primary rRNA binding proteins, it binds directly to 16S rRNA where it nucleates assembly of the head domain of the 30S subunit. Is located at the subunit interface close to the decoding center, probably blocks exit of the E-site tRNA. In Shewanella sp. (strain W3-18-1), this protein is Small ribosomal subunit protein uS7.